The following is a 1460-amino-acid chain: DNA-binding protein RFX7 (1460 aa).

A disordered region spans residues 1 to 34 (MAEEQQQPPPQQPDAHQQLPPSAPNSGVALPALV). Positions 108-183 (AFSWIRNTLE…YCYSGLRKKA (76 aa)) form a DNA-binding region, RFX-type winged-helix. Positions 188-193 (PTLPNL) match the PxLPxI/L motif; mediates interaction with ANKRA2 and RFXANK motif. The interval 308–352 (QRKIQKKQQEQKLQSPLPGESAAKKSESATSNGVTNLPNGNPSIL) is disordered. Serine 322 carries the phosphoserine modification. Positions 337 to 352 (TSNGVTNLPNGNPSIL) are enriched in polar residues. A Phosphoserine modification is found at serine 379. Over residues 404–416 (SVKQAPKTPQNVP) the composition is skewed to polar residues. Residues 404-428 (SVKQAPKTPQNVPASPGGDRSARHR) are disordered. Residues serine 418 and serine 455 each carry the phosphoserine modification. Over residues 481–513 (TPSNSNTPLKHSASVSSATGTTEESRSVPQIKN) the composition is skewed to polar residues. Disordered stretches follow at residues 481–585 (TPSN…PSNE), 632–715 (TFTS…AQIP), and 917–1015 (QSVT…SVPP). Residues 515–535 (SVVSLQSPGSRSSSAGGTSAV) show a composition bias toward low complexity. Residues 537 to 549 (VKVEPETSSDEHP) are compositionally biased toward basic and acidic residues. Composition is skewed to polar residues over residues 563–583 (QTPS…QKPS) and 632–644 (TFTS…NGDS). The residue at position 564 (threonine 564) is a Phosphothreonine. At serine 662 the chain carries Phosphoserine. N6-acetyllysine is present on lysine 704. 2 stretches are compositionally biased toward polar residues: residues 705 to 715 (TEGSTAGAQIP) and 917 to 933 (QSVT…SSTH). The span at 947-963 (TPTPTPTPTPTPTPTPT) shows a compositional bias: pro residues. The segment covering 971 to 1009 (GSQSLSRESPCSRLAQTTPVDSALGSSRHTPIGTPHSNC) has biased composition (polar residues). The residue at position 988 (threonine 988) is a Phosphothreonine. 2 positions are modified to phosphoserine: serine 1178 and serine 1329.

Belongs to the RFX family. In terms of assembly, interacts (via PxLPxI/L motif) with RFXANK (via ankyrin repeats). Interacts (via PxLPxI/L motif) with ANKRA2 (via ankyrin repeats). As to expression, widely expressed in many different tissue types including thymus and placenta, with high expression in brain. Expressed in both inhibitory and excitatory neurons in cortex.

The protein localises to the nucleus. Its function is as follows. Transcription factor. Acts as a transcriptional activator by binding to promoter regions of target genes, such as PDCD4, PIK3IP1, MXD4, PNRC1, and RFX5. Plays a role in natural killer (NK) cell maintenance and immunity. May play a role in the process of ciliogenesis in the neural tube and neural tube closure. The polypeptide is DNA-binding protein RFX7 (Homo sapiens (Human)).